The sequence spans 171 residues: AAF/I fimbrial subunit (171 aa).

The N-terminal stretch at 1–28 (MKTLKNMRRKNLCITLGLVSLLSRGANA) is a signal peptide.

Its subcellular location is the fimbrium. The chain is AAF/I fimbrial subunit (aggA) from Escherichia coli.